The following is a 308-amino-acid chain: Ribosomal RNA small subunit methyltransferase H (308 aa).

S-adenosyl-L-methionine contacts are provided by residues 36-38 (GGH), Asp55, Phe86, Asp103, and Gln110.

This sequence belongs to the methyltransferase superfamily. RsmH family.

It localises to the cytoplasm. The enzyme catalyses cytidine(1402) in 16S rRNA + S-adenosyl-L-methionine = N(4)-methylcytidine(1402) in 16S rRNA + S-adenosyl-L-homocysteine + H(+). In terms of biological role, specifically methylates the N4 position of cytidine in position 1402 (C1402) of 16S rRNA. The chain is Ribosomal RNA small subunit methyltransferase H from Helicobacter pylori (strain P12).